Consider the following 160-residue polypeptide: Transcription antitermination protein NusB (160 aa).

Belongs to the NusB family.

Functionally, involved in transcription antitermination. Required for transcription of ribosomal RNA (rRNA) genes. Binds specifically to the boxA antiterminator sequence of the ribosomal RNA (rrn) operons. In Sinorhizobium fredii (strain NBRC 101917 / NGR234), this protein is Transcription antitermination protein NusB.